The following is a 337-amino-acid chain: 4-hydroxy-2-oxovalerate aldolase (337 aa).

The Pyruvate carboxyltransferase domain maps to 6–256 (IRIMDTTLRD…ETGIDLFQIM (251 aa)). Residue 14 to 15 (RD) participates in substrate binding. D15 provides a ligand contact to Mn(2+). The Proton acceptor role is filled by H18. S168 and H195 together coordinate substrate. 2 residues coordinate Mn(2+): H195 and H197. Y286 lines the substrate pocket.

The protein belongs to the 4-hydroxy-2-oxovalerate aldolase family.

It carries out the reaction (S)-4-hydroxy-2-oxopentanoate = acetaldehyde + pyruvate. This is 4-hydroxy-2-oxovalerate aldolase (nahM) from Geobacillus genomosp. 3.